The following is a 532-amino-acid chain: Glucose-6-phosphate isomerase (532 aa).

Residue Glu322 is the Proton donor of the active site. Catalysis depends on residues His351 and Lys457.

The protein belongs to the GPI family.

Its subcellular location is the cytoplasm. It carries out the reaction alpha-D-glucose 6-phosphate = beta-D-fructose 6-phosphate. It functions in the pathway carbohydrate biosynthesis; gluconeogenesis. The protein operates within carbohydrate degradation; glycolysis; D-glyceraldehyde 3-phosphate and glycerone phosphate from D-glucose: step 2/4. In terms of biological role, catalyzes the reversible isomerization of glucose-6-phosphate to fructose-6-phosphate. The protein is Glucose-6-phosphate isomerase of Synechococcus sp. (strain JA-2-3B'a(2-13)) (Cyanobacteria bacterium Yellowstone B-Prime).